Reading from the N-terminus, the 516-residue chain is MYIYINNEIEELIECAKKIPILNNNENGNDHNKSISKLITIFKSKQRSRSSSFSLDTLNFNLSSSSSNSIEIDDENPYNTNNNNNSNNNNNNNNNNCNNSNNSNNNKNINSLDNIDINNNNKNNFNDCSSYSSFSSSECLSDIGNSCIDSLELFRLSDDIEEESEMIFNQVGPDRYNDLANIFSKSHKNLTILLKDINRDTLDCSECIDGSLSDNEWEKCLCCGDIHSLGDYKHVECIGKGGYGVVCKFINKKTNEIRAIKTIRKDYSALKEINTLKELGGQFTVNIFHTFLSPCKEKVLIEMEYLSGGDCAFHLNDVGVGFPEELAKQYTAETVLCLDFIHEKSIIHCDIKPNNMVIDSDGHIKLLDFGNAKKFNQKKPTSNDGILGSPRYISPEVLLFEPQSPAVDYWSLGIVMFELITGTTPFIGETPEEIFESILSRNTECIEIQKDAKDLIIKLLDPNPSTRIGSKDIKNHPYFNGINWDTIKTSQPIWKPNSSNNFITSINGCCKLINSF.

The tract at residues 69–115 (SIEIDDENPYNTNNNNNSNNNNNNNNNNCNNSNNSNNNKNINSLDNI) is disordered. Low complexity predominate over residues 79–115 (NTNNNNNSNNNNNNNNNNCNNSNNSNNNKNINSLDNI). Residues 232-479 (YKHVECIGKG…SKDIKNHPYF (248 aa)) enclose the Protein kinase domain. ATP contacts are provided by residues 238-246 (IGKGGYGVV) and K261. D350 serves as the catalytic Proton acceptor.

It belongs to the protein kinase superfamily. AGC Ser/Thr protein kinase family.

The catalysed reaction is L-seryl-[protein] + ATP = O-phospho-L-seryl-[protein] + ADP + H(+). It carries out the reaction L-threonyl-[protein] + ATP = O-phospho-L-threonyl-[protein] + ADP + H(+). In Dictyostelium discoideum (Social amoeba), this protein is Probable serine/threonine-protein kinase DDB_G0293276.